Here is a 345-residue protein sequence, read N- to C-terminus: Leucine zipper protein 2 (345 aa).

A signal peptide spans 1–19 (MKFNAAHYLLPLLPALVLS). Residues 16–211 (LVLSTRQDYE…QMKAMKETVQ (196 aa)) adopt a coiled-coil conformation. N133 carries N-linked (GlcNAc...) asparagine glycosylation. Residues 164–192 (LRYGKKDLLFKAQQLTELEQKLAVAKNEL) form a leucine-zipper region. Positions 223–345 (PPLSLMPSNP…GTPAREEKLL (123 aa)) are disordered. The segment covering 261 to 277 (GHHDSSQVQATKEESRR) has biased composition (basic and acidic residues). Residues 298 to 313 (PQSNSTAESELTTQKL) show a composition bias toward polar residues. N301 carries an N-linked (GlcNAc...) asparagine glycan.

As to expression, expression found only in the brain and spinal cord.

Its subcellular location is the secreted. This chain is Leucine zipper protein 2 (Luzp2), found in Mus musculus (Mouse).